A 607-amino-acid chain; its full sequence is COMPASS component cclA (607 aa).

The span at 1 to 19 (MASTHAAGSPAPSSSINSP) shows a compositional bias: low complexity. Disordered stretches follow at residues 1–22 (MAST…PILH) and 34–86 (GEGS…KSVA). The span at 57–69 (SKRNKRDSRKKRE) shows a compositional bias: basic residues. Positions 157–376 (IADTDFPHIK…YAFNLKETPA (220 aa)) constitute a B30.2/SPRY domain. A disordered region spans residues 587 to 607 (NTPITDVPVPPEPEDTPMTGG).

This sequence belongs to the cclA family. In terms of assembly, component of the COMPASS complex.

It is found in the nucleus. The protein resides in the chromosome. It localises to the telomere. Its function is as follows. Component of the COMPASS (Set1C) complex that specifically mono-, di- and trimethylates histone H3 to form H3K4me1/2/3, which subsequently plays a role in telomere length maintenance and transcription elongation regulation. Controls the production of several secondary metabolites, including monodictyphenone, emodin and emodin derivatives, as well as two anti-osteoporosis polyketides, F9775A and F9775B. This chain is COMPASS component cclA, found in Emericella nidulans (strain FGSC A4 / ATCC 38163 / CBS 112.46 / NRRL 194 / M139) (Aspergillus nidulans).